A 507-amino-acid chain; its full sequence is Glycine, alanine and asparagine-rich protein (507 aa).

Residues 1–17 (MLRVPLLVLCLALSVGA) form the signal peptide. Residues 158 to 185 (SAQALASATAELQAAQDAYDQASAYAEA) are a coiled coil. Gly residues predominate over residues 462-498 (GNGNGGNGRNGNGGNGRNGNGGNGGNGNGRNGRGGRY). Residues 462–507 (GNGNGGNGRNGNGGNGRNGNGGNGGNGNGRNGRGGRYYYGSSDYYY) form a disordered region.

As to expression, component of the acid-soluble and acid-insoluble organic matrix of calcified shell layers (at protein level).

Its subcellular location is the secreted. In Haliotis asinina (Donkey's ear abalone), this protein is Glycine, alanine and asparagine-rich protein.